The sequence spans 317 residues: Ribosomal RNA small subunit methyltransferase H (317 aa).

Residues 34–36 (GGH), D53, F80, D98, and Q105 contribute to the S-adenosyl-L-methionine site.

The protein belongs to the methyltransferase superfamily. RsmH family.

It localises to the cytoplasm. It catalyses the reaction cytidine(1402) in 16S rRNA + S-adenosyl-L-methionine = N(4)-methylcytidine(1402) in 16S rRNA + S-adenosyl-L-homocysteine + H(+). Specifically methylates the N4 position of cytidine in position 1402 (C1402) of 16S rRNA. The polypeptide is Ribosomal RNA small subunit methyltransferase H (Tropheryma whipplei (strain TW08/27) (Whipple's bacillus)).